The primary structure comprises 308 residues: Glycine--tRNA ligase alpha subunit (308 aa).

Belongs to the class-II aminoacyl-tRNA synthetase family. In terms of assembly, tetramer of two alpha and two beta subunits.

It is found in the cytoplasm. The enzyme catalyses tRNA(Gly) + glycine + ATP = glycyl-tRNA(Gly) + AMP + diphosphate. The polypeptide is Glycine--tRNA ligase alpha subunit (Streptococcus pyogenes serotype M3 (strain SSI-1)).